The primary structure comprises 179 residues: UPF0316 protein BH0621 (179 aa).

3 consecutive transmembrane segments (helical) span residues 9–29, 41–61, and 67–87; these read ALTM…LFTV, LAAT…SLVL, and IENL…GMKV.

Belongs to the UPF0316 family.

It is found in the cell membrane. This is UPF0316 protein BH0621 from Halalkalibacterium halodurans (strain ATCC BAA-125 / DSM 18197 / FERM 7344 / JCM 9153 / C-125) (Bacillus halodurans).